The primary structure comprises 204 residues: Phospholipase D (204 aa).

The signal sequence occupies residues 1 to 22 (MKSKNNKFIAMSIPFILGTALG). A PLD phosphodiesterase domain is found at 142-169 (VPGIAHNKVIIIDKKKVITGSFNFTVAA). Catalysis depends on residues H147, K149, and D154.

This sequence belongs to the phospholipase D family. Homodimer.

The protein localises to the secreted. It catalyses the reaction a 1,2-diacyl-sn-glycero-3-phosphocholine + H2O = a 1,2-diacyl-sn-glycero-3-phosphate + choline + H(+). Its function is as follows. Could be a virulence factor. The protein is Phospholipase D (pld) of Rickettsia typhi (strain ATCC VR-144 / Wilmington).